A 1254-amino-acid polypeptide reads, in one-letter code: SUN domain-containing ossification factor (1254 aa).

The first 29 residues, 1-29, serve as a signal peptide directing secretion; it reads MKKHRRALALVSCLFLCSLVWLPSWRVCC. Disordered stretches follow at residues 58-88, 118-270, and 282-304; these read KKDEREGPINAESLGKSGSNLPISPKEHKLK, EESS…DIPT, and EKEKSQSMHASSNGGSHATKKVQ. The segment covering 130–145 has biased composition (low complexity); it reads VENISSSSTSEITPIS. Positions 165-175 are enriched in acidic residues; the sequence is EQSETDCDVGE. Asn-202 and Asn-236 each carry an N-linked (GlcNAc...) asparagine glycan. Over residues 241–253 the composition is skewed to basic and acidic residues; sequence LKNESSDYTKPGD. The SUN domain maps to 284–453; the sequence is EKSQSMHASS…SLIRVFGTSM (170 aa). A compositionally biased stretch (polar residues) spans 288–297; it reads SMHASSNGGS. Asn-524 is a glycosylation site (N-linked (GlcNAc...) asparagine). Disordered stretches follow at residues 530-553, 583-605, and 759-788; these read NATATAAPKMPESTPVSTPVPSPE, EEEEEASPSTVTLLGSGEQEDES, and HIPSPVIPQESSVEIDNETEQKSESFSSIE. Low complexity predominate over residues 540-553; that stretch reads PESTPVSTPVPSPE. The stretch at 909–1009 forms a coiled coil; that stretch reads NQKESVFMRL…VAELKREVSD (101 aa). N-linked (GlcNAc...) asparagine glycans are attached at residues Asn-928 and Asn-955. A helical membrane pass occupies residues 1011 to 1031; it reads QSYLVISLVLCVVLGLMLCMQ. At Ser-1081 the chain carries Phosphoserine. The segment at 1152–1172 is disordered; that stretch reads EVYHSSYKGPPSEGSSETSSQ. A compositionally biased stretch (low complexity) spans 1163–1172; that stretch reads SEGSSETSSQ.

In terms of processing, O-glycosylated. O-mannosylated by POMT1 and POMT2 and elongated by POMGNT1. Post-translationally, N-glycosylated. Highly expressed in pancreas and testis and to a lower extent in prostate, ovary, heart, thymus, small intestine and spleen.

The protein localises to the rough endoplasmic reticulum membrane. Required for bone modeling during late embryogenesis. Regulates type I collagen synthesis in osteoblasts during their postnatal maturation. This chain is SUN domain-containing ossification factor (SUCO), found in Homo sapiens (Human).